The sequence spans 66 residues: Large ribosomal subunit protein uL29 (66 aa).

This sequence belongs to the universal ribosomal protein uL29 family.

This Helicobacter pylori (strain J99 / ATCC 700824) (Campylobacter pylori J99) protein is Large ribosomal subunit protein uL29 (rpmC).